Reading from the N-terminus, the 120-residue chain is NAD(P)H-quinone oxidoreductase subunit 3 (120 aa).

Helical transmembrane passes span Phe-10–Ile-30, Met-64–Val-84, and Leu-89–Ala-109.

It belongs to the complex I subunit 3 family. As to quaternary structure, NDH-1 can be composed of about 15 different subunits; different subcomplexes with different compositions have been identified which probably have different functions.

The protein localises to the cellular thylakoid membrane. It catalyses the reaction a plastoquinone + NADH + (n+1) H(+)(in) = a plastoquinol + NAD(+) + n H(+)(out). It carries out the reaction a plastoquinone + NADPH + (n+1) H(+)(in) = a plastoquinol + NADP(+) + n H(+)(out). Its function is as follows. NDH-1 shuttles electrons from an unknown electron donor, via FMN and iron-sulfur (Fe-S) centers, to quinones in the respiratory and/or the photosynthetic chain. The immediate electron acceptor for the enzyme in this species is believed to be plastoquinone. Couples the redox reaction to proton translocation, and thus conserves the redox energy in a proton gradient. Cyanobacterial NDH-1 also plays a role in inorganic carbon-concentration. The chain is NAD(P)H-quinone oxidoreductase subunit 3 from Prochlorococcus marinus (strain MIT 9515).